The primary structure comprises 224 residues: Germin-like protein 8-9 (224 aa).

Residues 1–22 (MASPSFCLFAALLALVSWQAIA) form the signal peptide. An intrachain disulfide couples C32 to C47. The Cupin type-1 domain maps to 62-212 (AMLDTPRKTN…AFQVGKGTID (151 aa)). N-linked (GlcNAc...) asparagine glycosylation is present at N76. 3 residues coordinate Mn(2+): H109, H111, and E116. N135 carries N-linked (GlcNAc...) asparagine glycosylation. H157 is a Mn(2+) binding site.

It belongs to the germin family. Oligomer (believed to be a pentamer but probably hexamer).

It is found in the secreted. The protein localises to the extracellular space. It localises to the apoplast. In terms of biological role, plays a role in broad-spectrum disease resistance. Probably has no oxalate oxidase activity even if the active site is conserved. The sequence is that of Germin-like protein 8-9 from Oryza sativa subsp. japonica (Rice).